Here is a 571-residue protein sequence, read N- to C-terminus: Glutamine--tRNA ligase (571 aa).

Residues 35–45 carry the 'HIGH' region motif; the sequence is PEPNGYLHIGH. ATP is bound by residues 36 to 38 and 42 to 48; these read EPN and HIGHAKS. L-glutamine-binding residues include D68 and Y213. ATP contacts are provided by residues T232, 262-263, and 270-272; these read RL and LSK. The 'KMSKS' region signature appears at 269-273; it reads ILSKR.

Belongs to the class-I aminoacyl-tRNA synthetase family. Monomer.

The protein localises to the cytoplasm. The catalysed reaction is tRNA(Gln) + L-glutamine + ATP = L-glutaminyl-tRNA(Gln) + AMP + diphosphate. In Buchnera aphidicola subsp. Acyrthosiphon pisum (strain 5A), this protein is Glutamine--tRNA ligase.